The chain runs to 38 residues: Kappa-theraphotoxin-Hm2a (38 aa).

3 disulfides stabilise this stretch: C2/C16, C9/C21, and C15/C32. F38 is modified (phenylalanine amide).

It belongs to the neurotoxin 10 (Hwtx-1) family. 13 (Hntx-13) subfamily. As to expression, expressed by the venom gland.

It localises to the secreted. In terms of biological role, inhibitor of voltage-gated potassium channels. It specifically inhibits Kv2.1/KCNB1 channels. In Heteroscodra maculata (Togo starburst tarantula), this protein is Kappa-theraphotoxin-Hm2a.